The following is a 411-amino-acid chain: Short chain dehydrogenase ausT (411 aa).

4 residues coordinate NADP(+): aspartate 105, glutamine 137, tyrosine 249, and arginine 253. Tyrosine 249 serves as the catalytic Proton donor. Tyrosine 263 acts as the Proton donor in catalysis.

Belongs to the short-chain dehydrogenases/reductases (SDR) family.

Its pathway is secondary metabolite biosynthesis; terpenoid biosynthesis. Short chain dehydrogenase; part of the gene cluster that mediates the biosynthesis of calidodehydroaustin, a fungal meroterpenoid. The first step of the pathway is the synthesis of 3,5-dimethylorsellinic acid by the polyketide synthase ausA. 3,5-dimethylorsellinic acid is then prenylated by the polyprenyl transferase ausN. Further epoxidation by the FAD-dependent monooxygenase ausM and cyclization by the probable terpene cyclase ausL lead to the formation of protoaustinoid A. Protoaustinoid A is then oxidized to spiro-lactone preaustinoid A3 by the combined action of the FAD-binding monooxygenases ausB and ausC, and the dioxygenase ausE. Acid-catalyzed keto-rearrangement and ring contraction of the tetraketide portion of preaustinoid A3 by ausJ lead to the formation of preaustinoid A4. The aldo-keto reductase ausK, with the help of ausH, is involved in the next step by transforming preaustinoid A4 into isoaustinone which is in turn hydroxylated by the P450 monooxygenase ausI to form austinolide. The cytochrome P450 monooxygenase ausG modifies austinolide to austinol. Austinol is further acetylated to austin by the O-acetyltransferase ausP, which spontaneously changes to dehydroaustin. The cytochrome P450 monooxygenase ausR then converts dehydroaustin is into 7-dehydrodehydroaustin. The hydroxylation catalyzed by ausR permits the O-acetyltransferase ausQ to add an additional acetyl group to the molecule, leading to the formation of acetoxydehydroaustin. The short chain dehydrogenase ausT catalyzes the reduction of the double bond present between carbon atoms 1 and 2 to convert 7-dehydrodehydroaustin into 1,2-dihydro-7-hydroxydehydroaustin. AusQ catalyzes not only an acetylation reaction but also the addition of the PKS ausV diketide product to 1,2-dihydro-7-hydroxydehydroaustin, forming precalidodehydroaustin. Finally, the iron/alpha-ketoglutarate-dependent dioxygenase converts precalidodehydroaustin into calidodehydroaustin. This is Short chain dehydrogenase ausT from Aspergillus calidoustus.